We begin with the raw amino-acid sequence, 756 residues long: MSKTILFLALFLSIVLNVQISFVVAESKVYVVYLGEKEHDNPESVTESHHQMLWSLLGSKEAVLDSIVYSYRHGFSGFAAKLTESQAQQISELPEVVQVIPNTLYEMTTTRTWDYLGVSPGNSDSLLQKANMGYNVIVGVIDSGVWPESEMFNDKGFGPIPSRWKGGCESGELFNASIHCNRKLIGAKYFVDGLVAEFGVVNRTQNPEYLSPRDFAGHGTHVASTIGGSFLPNVSYVGLGRGTARGGAPGVHIAVYKACWSGYCSGADVLKAMDEAIHDGVDILSLSLGPSVPLFPETEHTSVGAFHAVAKGIPVVIAAGNAGPTAQTISNVAPWVLTVAATTQDRSFPTAITLGNNITILGQAIYGGPELGFVGLTYPESPLSGDCEKLSANPNSTMEGKVVLCFAASTPSNAAIAAVINAGGLGLIMAKNPTHSLTPTRKFPWVSIDFELGTDILFYIRSTRSPIVKIQASKTLFGQSVSTKVATFSSRGPNSVSPAILKPDIAAPGVNILAAISPNSSINDGGFAMMSGTSMATPVVSGVVVLLKSLHPDWSPSAIKSAIVTTAWRTDPSGEPIFADGSSRKLADPFDYGGGLINPEKAVKPGLIYDMTTDDYVMYMCSVDYSDISISRVLGKITVCPNPKPSVLDLNLPSITIPNLRGEVTLTRTVTNVGPVNSVYKVVIDPPTGINVAVTPAELVFDYTTTKRSFTVRVSTTHKVNTGYYFGSLTWTDNMHNVAIPVSVRTQILQRYYDEN.

A signal peptide spans 1-25 (MSKTILFLALFLSIVLNVQISFVVA). Positions 26–108 (ESKVYVVYLG…VIPNTLYEMT (83 aa)) are cleaved as a propeptide — activation peptide. Residues 29-106 (VYVVYLGEKE…VQVIPNTLYE (78 aa)) enclose the Inhibitor I9 domain. In terms of domain architecture, Peptidase S8 spans 112-603 (TWDYLGVSPG…GGLINPEKAV (492 aa)). The active-site Charge relay system is the D142. 2 N-linked (GlcNAc...) asparagine glycosylation sites follow: N175 and N202. Residue H218 is the Charge relay system of the active site. N-linked (GlcNAc...) asparagine glycosylation is found at N233, N357, N395, and N519. In terms of domain architecture, PA spans 386–460 (DCEKLSANPN…ELGTDILFYI (75 aa)). S534 functions as the Charge relay system in the catalytic mechanism.

The protein belongs to the peptidase S8 family.

The protein resides in the secreted. This is Subtilisin-like protease SBT3.9 from Arabidopsis thaliana (Mouse-ear cress).